The primary structure comprises 393 residues: NAD(P)H-quinone oxidoreductase subunit H, chloroplastic (393 aa).

Belongs to the complex I 49 kDa subunit family. NDH is composed of at least 16 different subunits, 5 of which are encoded in the nucleus.

The protein resides in the plastid. Its subcellular location is the chloroplast thylakoid membrane. The enzyme catalyses a plastoquinone + NADH + (n+1) H(+)(in) = a plastoquinol + NAD(+) + n H(+)(out). The catalysed reaction is a plastoquinone + NADPH + (n+1) H(+)(in) = a plastoquinol + NADP(+) + n H(+)(out). In terms of biological role, NDH shuttles electrons from NAD(P)H:plastoquinone, via FMN and iron-sulfur (Fe-S) centers, to quinones in the photosynthetic chain and possibly in a chloroplast respiratory chain. The immediate electron acceptor for the enzyme in this species is believed to be plastoquinone. Couples the redox reaction to proton translocation, and thus conserves the redox energy in a proton gradient. This Populus alba (White poplar) protein is NAD(P)H-quinone oxidoreductase subunit H, chloroplastic.